A 250-amino-acid polypeptide reads, in one-letter code: GTP cyclohydrolase 1 type 2 homolog (250 aa).

His-63, His-64, Asp-100, His-218, and Glu-222 together coordinate a divalent metal cation.

Belongs to the GTP cyclohydrolase I type 2/NIF3 family. In terms of assembly, homohexamer.

The protein is GTP cyclohydrolase 1 type 2 homolog of Pyrococcus horikoshii (strain ATCC 700860 / DSM 12428 / JCM 9974 / NBRC 100139 / OT-3).